The following is a 691-amino-acid chain: Elongation factor G (691 aa).

A tr-type G domain is found at 8-283 (KKVRNIGIAA…AVVAYLPAPD (276 aa)). GTP-binding positions include 17 to 24 (AHIDAGKT), 81 to 85 (DTPGH), and 135 to 138 (NKMD).

Belongs to the TRAFAC class translation factor GTPase superfamily. Classic translation factor GTPase family. EF-G/EF-2 subfamily.

Its subcellular location is the cytoplasm. Its function is as follows. Catalyzes the GTP-dependent ribosomal translocation step during translation elongation. During this step, the ribosome changes from the pre-translocational (PRE) to the post-translocational (POST) state as the newly formed A-site-bound peptidyl-tRNA and P-site-bound deacylated tRNA move to the P and E sites, respectively. Catalyzes the coordinated movement of the two tRNA molecules, the mRNA and conformational changes in the ribosome. In Campylobacter jejuni subsp. jejuni serotype O:6 (strain 81116 / NCTC 11828), this protein is Elongation factor G.